The primary structure comprises 217 residues: Urease accessory protein UreG (217 aa).

Position 13–20 (13–20 (GPVGSGKT)) interacts with GTP.

The protein belongs to the SIMIBI class G3E GTPase family. UreG subfamily. As to quaternary structure, homodimer. UreD, UreF and UreG form a complex that acts as a GTP-hydrolysis-dependent molecular chaperone, activating the urease apoprotein by helping to assemble the nickel containing metallocenter of UreC. The UreE protein probably delivers the nickel.

The protein localises to the cytoplasm. In terms of biological role, facilitates the functional incorporation of the urease nickel metallocenter. This process requires GTP hydrolysis, probably effectuated by UreG. This Frankia alni (strain DSM 45986 / CECT 9034 / ACN14a) protein is Urease accessory protein UreG.